Reading from the N-terminus, the 123-residue chain is Chondroitin proteoglycan 8 (123 aa).

The N-terminal stretch at 1 to 16 (MRPFILLALLFSVAIA) is a signal peptide. Positions 32-123 (SVRRSTRGAD…SGSGDEAPAE (92 aa)) are disordered. Positions 38-60 (RGADKKADSSDSSDSNEKDDKVT) are enriched in basic and acidic residues. Residues serine 63 and serine 65 are each glycosylated (O-linked (Xyl...) (chondroitin sulfate) serine). Residues 74-84 (EQLRRVARDVE) are compositionally biased toward basic and acidic residues. O-linked (Xyl...) (chondroitin sulfate) serine glycans are attached at residues serine 87, serine 93, and serine 114.

In Caenorhabditis briggsae, this protein is Chondroitin proteoglycan 8 (cpg-8).